The chain runs to 512 residues: 2-isopropylmalate synthase (512 aa).

In terms of domain architecture, Pyruvate carboxyltransferase spans 5 to 268 (LIIFDTTLRD…DIGIDTQQIL (264 aa)). Mn(2+)-binding residues include Asp14, His202, His204, and Asn239. The segment at 394–512 (GFVSLSQHSE…SKADRVAAQG (119 aa)) is regulatory domain.

It belongs to the alpha-IPM synthase/homocitrate synthase family. LeuA type 1 subfamily. In terms of assembly, homodimer. Mn(2+) serves as cofactor.

The protein localises to the cytoplasm. It carries out the reaction 3-methyl-2-oxobutanoate + acetyl-CoA + H2O = (2S)-2-isopropylmalate + CoA + H(+). It functions in the pathway amino-acid biosynthesis; L-leucine biosynthesis; L-leucine from 3-methyl-2-oxobutanoate: step 1/4. Catalyzes the condensation of the acetyl group of acetyl-CoA with 3-methyl-2-oxobutanoate (2-ketoisovalerate) to form 3-carboxy-3-hydroxy-4-methylpentanoate (2-isopropylmalate). The sequence is that of 2-isopropylmalate synthase from Polaromonas naphthalenivorans (strain CJ2).